The chain runs to 202 residues: Casparian strip membrane protein 1 (202 aa).

Residues 1-13 show a composition bias toward polar residues; sequence MEKSESSTIQIAE. Residues 1 to 30 are disordered; it reads MEKSESSTIQIAESSKDRKGKAPLLPPPVH. The Cytoplasmic segment spans residues 1–42; sequence MEKSESSTIQIAESSKDRKGKAPLLPPPVHHERAAGYKRGVA. Residues 43-63 form a helical membrane-spanning segment; the sequence is IFDLILRISAATAALAATIVM. Residues 64 to 90 are Extracellular-facing; the sequence is GTTEQTLPFFTQFFQFRASYDDLPTFT. A helical transmembrane segment spans residues 91-111; it reads FFVIAMAIVTGYLILSVPFSI. Residues 112–130 lie on the Cytoplasmic side of the membrane; that stretch reads VCIARPVVAAPRILLILCD. A helical membrane pass occupies residues 131–151; sequence TLTVTLATSAAGASAAIVYLA. The Extracellular portion of the chain corresponds to 152–177; it reads HNGXSDANWLAICQQFNDFCQRVSGA. Residues 178–198 form a helical membrane-spanning segment; that stretch reads VVAAFVSAVLLIFLVVLSAIV. Residues 199 to 202 lie on the Cytoplasmic side of the membrane; it reads LKKH.

The protein belongs to the Casparian strip membrane proteins (CASP) family. In terms of assembly, homodimer and heterodimers.

Its subcellular location is the cell membrane. Functionally, regulates membrane-cell wall junctions and localized cell wall deposition. Required for establishment of the Casparian strip membrane domain (CSD) and the subsequent formation of Casparian strips, a cell wall modification of the root endodermis that determines an apoplastic barrier between the intraorganismal apoplasm and the extraorganismal apoplasm and prevents lateral diffusion. In Triphysaria pusilla (Dwarf owl's-clover), this protein is Casparian strip membrane protein 1.